We begin with the raw amino-acid sequence, 30 residues long: Photosystem I reaction center subunit XII (30 aa).

The helical transmembrane segment at 6-26 threads the bilayer; sequence VFTILAIALVPAVMAALLGSA.

Belongs to the PsaM family.

Its subcellular location is the cellular thylakoid membrane. This Synechococcus sp. (strain JA-3-3Ab) (Cyanobacteria bacterium Yellowstone A-Prime) protein is Photosystem I reaction center subunit XII.